The primary structure comprises 456 residues: RuvB-like helicase 1 (456 aa).

70 to 77 (GPPGTGKT) is an ATP binding site.

Belongs to the RuvB family. Forms homohexameric rings. May form a dodecamer with rept made of two stacked hexameric rings. Component of the chromatin remodeling Ino80 complex.

The protein localises to the nucleus. The catalysed reaction is ATP + H2O = ADP + phosphate + H(+). Its function is as follows. Acts as a transcriptional coactivator in Wg signaling. In terms of biological role, proposed core component of the chromatin remodeling Ino80 complex which is involved in transcriptional regulation, DNA replication and probably DNA repair. The chain is RuvB-like helicase 1 from Aedes aegypti (Yellowfever mosquito).